The chain runs to 274 residues: Kit ligand (274 aa).

The first 25 residues, 1-25 (MKKTQTWIITCIYLQLLLFNPLVKT), serve as a signal peptide directing secretion. Residues 26–215 (KGICENRVTD…SNFTGDSNLQ (190 aa)) are Extracellular-facing. Cystine bridges form between C29/C114 and C68/C164. N90, N97, N145, N196, and N207 each carry an N-linked (GlcNAc...) asparagine glycan. A helical membrane pass occupies residues 216 to 238 (WAAMALPAFFSLVIGFAFGALYW). Over 239–274 (KKKQPNLTRAVENIQINEEDNEISMLQEKEREFQEV) the chain is Cytoplasmic.

Belongs to the SCF family. In terms of assembly, homodimer, non-covalently linked. In terms of processing, a soluble form is produced by proteolytic processing of the extracellular domain.

It localises to the cytoplasm. It is found in the cytoskeleton. The protein localises to the cell membrane. Its subcellular location is the cell projection. The protein resides in the lamellipodium. It localises to the filopodium. It is found in the secreted. Functionally, stimulates the proliferation of mast cells. Able to augment the proliferation of both myeloid and lymphoid hematopoietic progenitors in bone marrow culture. Also mediates cell-cell adhesion. Acts synergistically with other cytokines, probably interleukins. This Equus caballus (Horse) protein is Kit ligand (KITLG).